The sequence spans 407 residues: tRNA (guanine-N(7)-)-methyltransferase non-catalytic subunit wuho (407 aa).

3 WD repeats span residues 83–124 (AIEV…ARLL), 171–210 (GHLSVVFDILWTDDQQHIITCDRDDKIRVTNYPATFDIHS), and 214–252 (GHKEFVSGLALLTEQHIVSSSGDKTLRVWNFIEGKELLI).

Belongs to the WD repeat TRM82 family. As to quaternary structure, forms a heterodimer with the catalytic subunit Mettl1. Interacts with mei-P26 and weakly interacts with bgcn; required for the function or formation of the mei-P26-bgcn-bam-sxl complex. Interacts with nanos; may be involved in mei-P26-dependent derepression of the BMP signaling pathway. Interacts with Myc; the interaction may be mediated by mei-P26 and may be involved in the regulation of ribosome biogenesis. In terms of tissue distribution, in testis, it is present at high level in hub cells, a niche for germline stem cells of testis. Ubiquitously expressed in all testicular cells throughout spermatogenesis. Ubiquitously expressed in all germline and somatic cells of the ovary.

The protein resides in the nucleus. The protein localises to the cytoplasm. It participates in tRNA modification; N(7)-methylguanine-tRNA biosynthesis. Its function is as follows. Required for the Mettl1-dependent formation of N(7)-methylguanine at position 46 (m7G46) in tRNA. In the Mettl1-wuho methyltransferase complex, it is required to stabilize and induce conformational changes of the catalytic subunit. Required for binding of nanos mRNA and repression of translation by the mei-P26-bgcn-bam-sxl complex. May cooperate with mei-P26 and nanos to derepress the BMP signaling pathway. May cooperate with mei-P26 to suppress expression of a subset of microRNAs. May cooperate with mei-P26 to regulate bam expression levels in germline cells during gametogenesis. Required to promote mitosis to meiosis transition during gametogenesis. May regulate germline cell division in part by regulating ribosome biogenesis. The protein is tRNA (guanine-N(7)-)-methyltransferase non-catalytic subunit wuho of Drosophila ananassae (Fruit fly).